The chain runs to 347 residues: Heat-inducible transcription repressor HrcA (347 aa).

Belongs to the HrcA family.

Negative regulator of class I heat shock genes (grpE-dnaK-dnaJ and groELS operons). Prevents heat-shock induction of these operons. This is Heat-inducible transcription repressor HrcA from Nocardia farcinica (strain IFM 10152).